The following is a 491-amino-acid chain: MPVLIATVGVVAVAALVIAIFVVIKFGRAPRVDAGNVRQPSGMSGPDAAAAEAEIREARSELERREQRLAEREARLDAEHERLAARERQLAELEEKLGRLQAELAQVAEERRLLLERTAGLTAEAAKAELVALIENQAKRDAALTVREIERAATEEAERRAREIVTTAIQRVASEQTAESVVSVVHLPGDEMKGRIIGREGRNIRAFESITGVNLIIDDTPEAVLLSCFDPVRREIARVALERLVDDGRIHPLRIEEVYEASRLEVERLCQRAAEDALLAVGITGMHPELVALLGRLRYRTSYGQNVLKHLVETAHLAGVMAAELHIDPQLVKRGALLHDIGKALSHEVEGSHALIGAELARRYGEHEDVVHAIEAHHNEVEPRTIEAVLTQAADAISGGRPGARRESLESYVQRLERLEEIASAYEGVEKVFAMQAGRELRVMVLPDVVDDIQAQVIARDIAKQIETELTYPGQIRVTVVRETRASEFAH.

Residues 4–24 (LIATVGVVAVAALVIAIFVVI) form a helical membrane-spanning segment. The 67-residue stretch at 181–247 (VVSVVHLPGD…RVALERLVDD (67 aa)) folds into the KH domain. Positions 307–400 (VLKHLVETAH…TQAADAISGG (94 aa)) constitute an HD domain.

This sequence belongs to the RNase Y family.

Its subcellular location is the cell membrane. In terms of biological role, endoribonuclease that initiates mRNA decay. In Acidothermus cellulolyticus (strain ATCC 43068 / DSM 8971 / 11B), this protein is Ribonuclease Y.